Consider the following 162-residue polypeptide: Phosphopantetheine adenylyltransferase (162 aa).

Residue Ser11 participates in substrate binding. Residues 11–12 and His19 contribute to the ATP site; that span reads SF. Substrate is bound by residues Lys43, Leu75, and Arg89. Residues 90–92, Glu100, and 125–131 each bind ATP; these read GLR and YSYLSSS.

This sequence belongs to the bacterial CoaD family. In terms of assembly, homohexamer. It depends on Mg(2+) as a cofactor.

Its subcellular location is the cytoplasm. The catalysed reaction is (R)-4'-phosphopantetheine + ATP + H(+) = 3'-dephospho-CoA + diphosphate. It participates in cofactor biosynthesis; coenzyme A biosynthesis; CoA from (R)-pantothenate: step 4/5. In terms of biological role, reversibly transfers an adenylyl group from ATP to 4'-phosphopantetheine, yielding dephospho-CoA (dPCoA) and pyrophosphate. In Geotalea uraniireducens (strain Rf4) (Geobacter uraniireducens), this protein is Phosphopantetheine adenylyltransferase.